The chain runs to 543 residues: MATTLDLKSKEEKDAELDKRIEALRRKNEALIRRYQEIEEDRKKAELEGVAVTAPRKSRSMEKENMAVEEKSLGPSRRTPGTPRPPGASRGGRTHPQQGGRAGVGRASQGWEDGAGEQLRGGPGGRGRRGRGRGSPHLLGAGDNSTSDRKSKEWEERRRQNIEKMNEEMEKIAEYERNQREGVLEPNPVRNFLDDPRRRGGPLEESERDRREGSRRHGRNWGGSDFERVRSGLEQERQGRRAGLGSGGDMTMSMTGRERSEYLRWKQEREKIDQERLQRHRKPTGQWRREWDAEKTDGMFKDGPAPTHELSHRYDDQAWARPPKPPTFGEFLSQHKAEVSSRRRRKNSRPQAKVAPRAYSDHDNRWETREEAVSSAPESSQSISLEETPTQASETPAPAHRPPEEDGEEDVGEEEEGEEEGEDEEDEEWEDVSEDVTEEEEEEEEEFEEDEEGPKDQEAATVPDHQPEAEPAGKPTCEQVDPVPAGSQELLSPVPVEPPIPFSPSEDHQPVSDWGEEMELNSPGTAHLPGTHSSGEAWPFANA.

2 stretches are compositionally biased toward basic and acidic residues: residues 38–47 (IEEDRKKAEL) and 59–72 (RSME…EEKS). Residues 38–543 (IEEDRKKAEL…SGEAWPFANA (506 aa)) form a disordered region. Thr94 bears the Phosphothreonine mark. Arg106, Arg120, Arg126, and Arg128 each carry omega-N-methylarginine. Residues Arg129, Arg131, and Arg133 each carry the asymmetric dimethylarginine modification. Residue Ser135 is modified to Phosphoserine. 3 stretches are compositionally biased toward basic and acidic residues: residues 146–183 (TSDR…REGV), 192–212 (FLDD…DRRE), and 225–239 (DFER…ERQG). Positions 147–183 (SDRKSKEWEERRRQNIEKMNEEMEKIAEYERNQREGV) form a coiled coil. Residues Ser246 and Ser253 each carry the phosphoserine modification. 4 stretches are compositionally biased toward basic and acidic residues: residues 256 to 277 (GRER…QERL), 287 to 300 (WRRE…DGMF), 309 to 318 (ELSHRYDDQA), and 359 to 372 (YSDH…REEA). Phosphoserine occurs at positions 374 and 384. The span at 376–394 (APESSQSISLEETPTQASE) shows a compositional bias: polar residues. A compositionally biased stretch (acidic residues) spans 405–453 (EDGEEDVGEEEEGEEEGEDEEDEEWEDVSEDVTEEEEEEEEEFEEDEEG). The stretch at 422–452 (EDEEDEEWEDVSEDVTEEEEEEEEEFEEDEE) forms a coiled coil. Ser533 carries the phosphoserine modification.

In terms of assembly, probable component of the exon junction complex (EJC); the association is RNA-dependent.

Probable component of the exon junction complex (EJC), a multiprotein complex that associates immediately upstream of the exon-exon junction on mRNAs and serves as a positional landmark for the intron exon structure of genes and directs post-transcriptional processes in the cytoplasm such as mRNA export, nonsense-mediated mRNA decay (NMD) or translation. This Mus musculus (Mouse) protein is Coiled-coil domain-containing protein 9 (Ccdc9).